Here is a 280-residue protein sequence, read N- to C-terminus: Diaminopimelate epimerase (280 aa).

Asn-13 and Asn-64 together coordinate substrate. Cys-73 acts as the Proton donor in catalysis. Residues 74–75, Asn-164, Asn-197, and 215–216 contribute to the substrate site; these read GN and ER. The active-site Proton acceptor is Cys-224. Position 225–226 (225–226) interacts with substrate; that stretch reads GT.

Belongs to the diaminopimelate epimerase family. Homodimer.

It is found in the cytoplasm. The enzyme catalyses (2S,6S)-2,6-diaminopimelate = meso-2,6-diaminopimelate. Its pathway is amino-acid biosynthesis; L-lysine biosynthesis via DAP pathway; DL-2,6-diaminopimelate from LL-2,6-diaminopimelate: step 1/1. Functionally, catalyzes the stereoinversion of LL-2,6-diaminopimelate (L,L-DAP) to meso-diaminopimelate (meso-DAP), a precursor of L-lysine and an essential component of the bacterial peptidoglycan. In Leptospira biflexa serovar Patoc (strain Patoc 1 / Ames), this protein is Diaminopimelate epimerase.